A 387-amino-acid chain; its full sequence is Pepsin II-1 (387 aa).

An N-terminal signal peptide occupies residues methionine 1–cysteine 15. Residues isoleucine 16–phenylalanine 59 constitute a propeptide, activation peptide. The Peptidase A1 domain occupies tyrosine 75 to alanine 384. Aspartate 93 is an active-site residue. The cysteines at positions 106 and 111 are disulfide-linked. Phosphoserine is present on serine 129. Cysteines 267 and 271 form a disulfide. Residue aspartate 276 is part of the active site. Cysteine 310 and cysteine 343 are joined by a disulfide.

This sequence belongs to the peptidase A1 family.

Its subcellular location is the secreted. The catalysed reaction is Preferential cleavage: hydrophobic, preferably aromatic, residues in P1 and P1' positions. Cleaves 1-Phe-|-Val-2, 4-Gln-|-His-5, 13-Glu-|-Ala-14, 14-Ala-|-Leu-15, 15-Leu-|-Tyr-16, 16-Tyr-|-Leu-17, 23-Gly-|-Phe-24, 24-Phe-|-Phe-25 and 25-Phe-|-Tyr-26 bonds in the B chain of insulin.. Its function is as follows. Shows particularly broad specificity; although bonds involving phenylalanine and leucine are preferred, many others are also cleaved to some extent. This is Pepsin II-1 from Oryctolagus cuniculus (Rabbit).